Reading from the N-terminus, the 95-residue chain is Co-chaperonin GroES (95 aa).

It belongs to the GroES chaperonin family. Heptamer of 7 subunits arranged in a ring. Interacts with the chaperonin GroEL.

It is found in the cytoplasm. Together with the chaperonin GroEL, plays an essential role in assisting protein folding. The GroEL-GroES system forms a nano-cage that allows encapsulation of the non-native substrate proteins and provides a physical environment optimized to promote and accelerate protein folding. GroES binds to the apical surface of the GroEL ring, thereby capping the opening of the GroEL channel. This Bordetella avium (strain 197N) protein is Co-chaperonin GroES.